The following is a 420-amino-acid chain: Gamma-glutamyl phosphate reductase (420 aa).

Belongs to the gamma-glutamyl phosphate reductase family.

It localises to the cytoplasm. The catalysed reaction is L-glutamate 5-semialdehyde + phosphate + NADP(+) = L-glutamyl 5-phosphate + NADPH + H(+). The protein operates within amino-acid biosynthesis; L-proline biosynthesis; L-glutamate 5-semialdehyde from L-glutamate: step 2/2. Functionally, catalyzes the NADPH-dependent reduction of L-glutamate 5-phosphate into L-glutamate 5-semialdehyde and phosphate. The product spontaneously undergoes cyclization to form 1-pyrroline-5-carboxylate. In Streptococcus pneumoniae (strain 70585), this protein is Gamma-glutamyl phosphate reductase.